The chain runs to 140 residues: Calcitonin (140 aa).

Positions 1–25 are cleaved as a signal peptide; sequence MGFWKFSPFLPLSILVLYQVGIIQA. The propeptide occupies 26-81; that stretch reads APFRSALESLPDPAVLPEEESRLLLAALVKDYVQMKVRALEQEQETGGASLDSPRA. An intrachain disulfide couples Cys-84 to Cys-90. At Pro-115 the chain carries Proline amide. The propeptide occupies 120–140; it reads VMARGLERDHGPHIGTSQDAY.

It belongs to the calcitonin family.

Its subcellular location is the secreted. In terms of biological role, calcitonin is a peptide hormone that causes a rapid but short-lived drop in the level of calcium and phosphate in blood by promoting the incorporation of those ions in the bones. Calcitonin function is mediated by the calcitonin receptor/CALCR and the CALCR-RAMP2 (AMYR2) receptor complex. This chain is Calcitonin (CALCA), found in Equus caballus (Horse).